A 453-amino-acid chain; its full sequence is Glutamyl-tRNA(Gln) amidotransferase subunit A (453 aa).

Residues lysine 55 and serine 130 each act as charge relay system in the active site. The active-site Acyl-ester intermediate is the serine 154.

It belongs to the amidase family. GatA subfamily. Heterotrimer of A, B and C subunits.

It catalyses the reaction L-glutamyl-tRNA(Gln) + L-glutamine + ATP + H2O = L-glutaminyl-tRNA(Gln) + L-glutamate + ADP + phosphate + H(+). Its function is as follows. Allows the formation of correctly charged Gln-tRNA(Gln) through the transamidation of misacylated Glu-tRNA(Gln) in organisms which lack glutaminyl-tRNA synthetase. The reaction takes place in the presence of glutamine and ATP through an activated gamma-phospho-Glu-tRNA(Gln). The sequence is that of Glutamyl-tRNA(Gln) amidotransferase subunit A from Aliarcobacter butzleri (strain RM4018) (Arcobacter butzleri).